The primary structure comprises 327 residues: Mycothiol acetyltransferase (327 aa).

2 N-acetyltransferase domains span residues 11–159 and 162–327; these read EPHG…VTLP and VQIR…EGTS. Glu-42 is a 1D-myo-inositol 2-(L-cysteinylamino)-2-deoxy-alpha-D-glucopyranoside binding site. 89-91 lines the acetyl-CoA pocket; it reads LVI. The 1D-myo-inositol 2-(L-cysteinylamino)-2-deoxy-alpha-D-glucopyranoside site is built by Glu-189, Lys-228, and Glu-251. Acetyl-CoA contacts are provided by residues 255–257 and 262–268; these read LGV and QGLGLGR. Tyr-289 contacts 1D-myo-inositol 2-(L-cysteinylamino)-2-deoxy-alpha-D-glucopyranoside. 294–299 is an acetyl-CoA binding site; the sequence is NAPAIR.

This sequence belongs to the acetyltransferase family. MshD subfamily. As to quaternary structure, monomer.

It catalyses the reaction 1D-myo-inositol 2-(L-cysteinylamino)-2-deoxy-alpha-D-glucopyranoside + acetyl-CoA = mycothiol + CoA + H(+). In terms of biological role, catalyzes the transfer of acetyl from acetyl-CoA to desacetylmycothiol (Cys-GlcN-Ins) to form mycothiol. The protein is Mycothiol acetyltransferase of Acidothermus cellulolyticus (strain ATCC 43068 / DSM 8971 / 11B).